Reading from the N-terminus, the 198-residue chain is Orotate phosphoribosyltransferase (198 aa).

5-phospho-alpha-D-ribose 1-diphosphate contacts are provided by residues arginine 108, lysine 109, lysine 112, histidine 114, and 135–143 (EDVVTTGKS). Orotate-binding residues include threonine 139 and arginine 167.

It belongs to the purine/pyrimidine phosphoribosyltransferase family. PyrE subfamily. Homodimer. Requires Mg(2+) as cofactor.

The catalysed reaction is orotidine 5'-phosphate + diphosphate = orotate + 5-phospho-alpha-D-ribose 1-diphosphate. It functions in the pathway pyrimidine metabolism; UMP biosynthesis via de novo pathway; UMP from orotate: step 1/2. Its function is as follows. Catalyzes the transfer of a ribosyl phosphate group from 5-phosphoribose 1-diphosphate to orotate, leading to the formation of orotidine monophosphate (OMP). The protein is Orotate phosphoribosyltransferase of Synechocystis sp. (strain ATCC 27184 / PCC 6803 / Kazusa).